The following is a 36-amino-acid chain: Pancreatic polypeptide (36 aa).

Phe36 carries the post-translational modification Phenylalanine amide.

Belongs to the NPY family.

It is found in the secreted. Its function is as follows. Hormone secreted by pancreatic cells that acts as a regulator of pancreatic and gastrointestinal functions. The protein is Pancreatic polypeptide (ppy) of Rana temporaria (European common frog).